We begin with the raw amino-acid sequence, 145 residues long: Basic phospholipase A2 KPA2 (145 aa).

The signal sequence occupies residues 1–19 (MYPAHLLVLVAVCVSLLGA). Residues 20 to 27 (ANIPPQPL) constitute a propeptide that is removed on maturation. 7 disulfide bridges follow: Cys38/Cys97, Cys52/Cys144, Cys54/Cys70, Cys69/Cys125, Cys76/Cys118, Cys86/Cys111, and Cys104/Cys116. Residues Tyr53, Gly55, and Gly57 each coordinate Ca(2+). His73 is an active-site residue. Ca(2+) is bound at residue Asp74. Asp119 is a catalytic residue.

It belongs to the phospholipase A2 family. Group I subfamily. D49 sub-subfamily. In terms of assembly, monomer. Ca(2+) is required as a cofactor. As to expression, expressed by the venom gland.

It is found in the secreted. It catalyses the reaction a 1,2-diacyl-sn-glycero-3-phosphocholine + H2O = a 1-acyl-sn-glycero-3-phosphocholine + a fatty acid + H(+). Snake venom phospholipase A2 (PLA2) that shows anticoagulant and neurotoxic activities. PLA2 catalyzes the calcium-dependent hydrolysis of the 2-acyl groups in 3-sn-phosphoglycerides. This Bungarus caeruleus (Indian krait) protein is Basic phospholipase A2 KPA2.